We begin with the raw amino-acid sequence, 375 residues long: Erythronate-4-phosphate dehydrogenase (375 aa).

Substrate-binding residues include serine 45 and threonine 66. The NAD(+) site is built by aspartate 146 and threonine 175. Arginine 208 is a catalytic residue. Residue aspartate 232 coordinates NAD(+). Residue glutamate 237 is part of the active site. Histidine 254 (proton donor) is an active-site residue. Glycine 257 is an NAD(+) binding site. Tyrosine 258 lines the substrate pocket.

This sequence belongs to the D-isomer specific 2-hydroxyacid dehydrogenase family. PdxB subfamily. As to quaternary structure, homodimer.

The protein resides in the cytoplasm. It catalyses the reaction 4-phospho-D-erythronate + NAD(+) = (R)-3-hydroxy-2-oxo-4-phosphooxybutanoate + NADH + H(+). It participates in cofactor biosynthesis; pyridoxine 5'-phosphate biosynthesis; pyridoxine 5'-phosphate from D-erythrose 4-phosphate: step 2/5. Functionally, catalyzes the oxidation of erythronate-4-phosphate to 3-hydroxy-2-oxo-4-phosphonooxybutanoate. This Yersinia pseudotuberculosis serotype O:1b (strain IP 31758) protein is Erythronate-4-phosphate dehydrogenase.